Here is a 229-residue protein sequence, read N- to C-terminus: UPF0758 protein CLH_0547 (229 aa).

Residues 107–229 enclose the MPN domain; it reads KIMSPNDIAM…FISLKEKGFI (123 aa). Zn(2+) contacts are provided by His-178, His-180, and Asp-191. A JAMM motif motif is present at residues 178 to 191; sequence HNHPSGDPTPSKED.

The protein belongs to the UPF0758 family.

This is UPF0758 protein CLH_0547 from Clostridium botulinum (strain Alaska E43 / Type E3).